A 101-amino-acid polypeptide reads, in one-letter code: Stefin-C (101 aa).

Residue methionine 1 is modified to N-acetylmethionine. The Secondary area of contact motif lies at 49–53; it reads QVVAG.

The protein belongs to the cystatin family.

It localises to the cytoplasm. In terms of biological role, strong inhibitor of papain and cathepsin L but poor inhibitor of cathepsin B. This chain is Stefin-C, found in Bos taurus (Bovine).